The following is a 342-amino-acid chain: Holliday junction branch migration complex subunit RuvB (342 aa).

Residues 1 to 181 (MENRMVTPFD…FGMLCAMEFY (181 aa)) form a large ATPase domain (RuvB-L) region. ATP-binding positions include leucine 20, arginine 21, glycine 62, lysine 65, threonine 66, threonine 67, 128–130 (EDY), arginine 171, tyrosine 181, and arginine 218. Residue threonine 66 coordinates Mg(2+). Residues 182-252 (TDEELMEIVV…GAKAALDLLE (71 aa)) are small ATPAse domain (RuvB-S). A head domain (RuvB-H) region spans residues 255-342 (KEGLDKIDNK…KDNQVSIFNK (88 aa)). 2 residues coordinate DNA: arginine 310 and arginine 315.

This sequence belongs to the RuvB family. As to quaternary structure, homohexamer. Forms an RuvA(8)-RuvB(12)-Holliday junction (HJ) complex. HJ DNA is sandwiched between 2 RuvA tetramers; dsDNA enters through RuvA and exits via RuvB. An RuvB hexamer assembles on each DNA strand where it exits the tetramer. Each RuvB hexamer is contacted by two RuvA subunits (via domain III) on 2 adjacent RuvB subunits; this complex drives branch migration. In the full resolvosome a probable DNA-RuvA(4)-RuvB(12)-RuvC(2) complex forms which resolves the HJ.

Its subcellular location is the cytoplasm. The enzyme catalyses ATP + H2O = ADP + phosphate + H(+). Functionally, the RuvA-RuvB-RuvC complex processes Holliday junction (HJ) DNA during genetic recombination and DNA repair, while the RuvA-RuvB complex plays an important role in the rescue of blocked DNA replication forks via replication fork reversal (RFR). RuvA specifically binds to HJ cruciform DNA, conferring on it an open structure. The RuvB hexamer acts as an ATP-dependent pump, pulling dsDNA into and through the RuvAB complex. RuvB forms 2 homohexamers on either side of HJ DNA bound by 1 or 2 RuvA tetramers; 4 subunits per hexamer contact DNA at a time. Coordinated motions by a converter formed by DNA-disengaged RuvB subunits stimulates ATP hydrolysis and nucleotide exchange. Immobilization of the converter enables RuvB to convert the ATP-contained energy into a lever motion, pulling 2 nucleotides of DNA out of the RuvA tetramer per ATP hydrolyzed, thus driving DNA branch migration. The RuvB motors rotate together with the DNA substrate, which together with the progressing nucleotide cycle form the mechanistic basis for DNA recombination by continuous HJ branch migration. Branch migration allows RuvC to scan DNA until it finds its consensus sequence, where it cleaves and resolves cruciform DNA. The polypeptide is Holliday junction branch migration complex subunit RuvB (Clostridium botulinum (strain ATCC 19397 / Type A)).